Consider the following 132-residue polypeptide: Phosphomevalonate dehydratase small subunit (132 aa).

The Proton acceptor role is filled by Ser61.

Belongs to the AcnX type II small subunit family. As to quaternary structure, heterodimer composed of a large subunit (PMDh-L) and a small subunit (PMDh-S).

The catalysed reaction is (R)-5-phosphomevalonate = (2E)-3-methyl-5-phosphooxypent-2-enoate + H2O. Its pathway is isoprenoid biosynthesis; isopentenyl diphosphate biosynthesis via mevalonate pathway. Functionally, component of a hydro-lyase that catalyzes the dehydration of mevalonate 5-phosphate (MVA5P) to form trans-anhydromevalonate 5-phosphate (tAHMP). Involved in the archaeal mevalonate (MVA) pathway, which provides fundamental precursors for isoprenoid biosynthesis, such as isopentenyl diphosphate (IPP) and dimethylallyl diphosphate (DMAPP). This is Phosphomevalonate dehydratase small subunit from Archaeoglobus fulgidus (strain ATCC 49558 / DSM 4304 / JCM 9628 / NBRC 100126 / VC-16).